We begin with the raw amino-acid sequence, 229 residues long: MKLSFHGQSTIYFEGNGKKVIVDPFISGNDKCDLDEQTLDVDYIILTHGHADHFGDVVELANRNHATVIGSAELQGYLSTYHGVEDVHGMNIGGKAKFDFGSVKYVQAFHSSSFTHEDGIPVYLGMPMGLILEVEGKTIYHMGDTGLFSDMKLIAERHPVDVCFVPIGDNFTMGIDDASYAINEFVKPKISVPVHYNTFPLIEQDPQQFKDAVHEGEVQILEPGESVSF.

Belongs to the UPF0173 family.

The polypeptide is UPF0173 metal-dependent hydrolase SH1218 (Staphylococcus haemolyticus (strain JCSC1435)).